Consider the following 223-residue polypeptide: Probable cell wall protein PGA61 (223 aa).

A signal peptide spans 1-16; that stretch reads MKSGLLLAVILPVAFA. N-linked (GlcNAc...) asparagine glycosylation is present at Asn25. Positions 83–134 are disordered; sequence GAPSSSSTPTSSTETTSSTEAETTEAETTEQPSSSTSSNTESSKTTILETPS. Composition is skewed to low complexity over residues 84 to 103 and 111 to 128; these read APSS…STEA and TEQP…SKTT. The N-linked (GlcNAc...) asparagine glycan is linked to Asn188. A lipid anchor (GPI-anchor amidated asparagine) is attached at Asn202. A propeptide spans 203-223 (removed in mature form); that stretch reads GAGRAAVIGSGSLLALLLNFI.

Belongs to the IHD1 family. Post-translationally, the GPI-anchor is attached to the protein in the endoplasmic reticulum and serves to target the protein to the cell surface. There, the glucosamine-inositol phospholipid moiety is cleaved off and the GPI-modified mannoprotein is covalently attached via its lipidless GPI glycan remnant to the 1,6-beta-glucan of the outer cell wall layer.

It localises to the secreted. Its subcellular location is the cell wall. It is found in the membrane. Functionally, probable GPI-anchored cell wall protein that may be involved in cell wall organization, hyphal growth, as well as in virulence. This is Probable cell wall protein PGA61 (PGA61) from Candida albicans (strain SC5314 / ATCC MYA-2876) (Yeast).